The chain runs to 349 residues: GTP 3',8-cyclase (349 aa).

One can recognise a Radical SAM core domain in the interval 24 to 249; the sequence is PFGRAITYLR…VDSDYQTGGP (226 aa). R33 serves as a coordination point for GTP. 2 residues coordinate [4Fe-4S] cluster: C40 and C44. An S-adenosyl-L-methionine-binding site is contributed by Y46. C47 provides a ligand contact to [4Fe-4S] cluster. R82 is a GTP binding site. G86 serves as a coordination point for S-adenosyl-L-methionine. GTP is bound at residue T116. S140 is a binding site for S-adenosyl-L-methionine. Position 176 (K176) interacts with GTP. Residue M210 coordinates S-adenosyl-L-methionine. Residues C273 and C276 each contribute to the [4Fe-4S] cluster site. Residue 278–280 participates in GTP binding; it reads RVR. A [4Fe-4S] cluster-binding site is contributed by C290.

This sequence belongs to the radical SAM superfamily. MoaA family. In terms of assembly, monomer and homodimer. Requires [4Fe-4S] cluster as cofactor.

The catalysed reaction is GTP + AH2 + S-adenosyl-L-methionine = (8S)-3',8-cyclo-7,8-dihydroguanosine 5'-triphosphate + 5'-deoxyadenosine + L-methionine + A + H(+). Its pathway is cofactor biosynthesis; molybdopterin biosynthesis. Its function is as follows. Catalyzes the cyclization of GTP to (8S)-3',8-cyclo-7,8-dihydroguanosine 5'-triphosphate. This chain is GTP 3',8-cyclase, found in Agrobacterium fabrum (strain C58 / ATCC 33970) (Agrobacterium tumefaciens (strain C58)).